A 157-amino-acid polypeptide reads, in one-letter code: Glutathione peroxidase homolog BsaA (157 aa).

C35 is a catalytic residue.

Belongs to the glutathione peroxidase family.

The polypeptide is Glutathione peroxidase homolog BsaA (bsaA) (Halalkalibacterium halodurans (strain ATCC BAA-125 / DSM 18197 / FERM 7344 / JCM 9153 / C-125) (Bacillus halodurans)).